A 353-amino-acid chain; its full sequence is uncharacterized protein (353 aa).

One can recognise an HTH luxR-type domain in the interval Asn-18 to Phe-83. The H-T-H motif DNA-binding region spans Val-42 to Met-61. The EAL domain maps to Asn-98–Leu-350.

This is an uncharacterized protein from Escherichia coli (strain K12).